A 38-amino-acid polypeptide reads, in one-letter code: Defensin D7 (38 aa).

It belongs to the DEFL family. Group IV subfamily. Distributed in the epidermal cell layer of leaves and in the subepidermal layer region of stems. Not in roots.

The protein resides in the secreted. It localises to the cell wall. Antimicrobial peptide. Active against Fusarium spp., Gram-positive and Gram-negative bacterial pathogens. In Spinacia oleracea (Spinach), this protein is Defensin D7.